A 129-amino-acid polypeptide reads, in one-letter code: Small ribosomal subunit protein uS11 (129 aa).

The protein belongs to the universal ribosomal protein uS11 family. Part of the 30S ribosomal subunit. Interacts with proteins S7 and S18. Binds to IF-3.

Functionally, located on the platform of the 30S subunit, it bridges several disparate RNA helices of the 16S rRNA. Forms part of the Shine-Dalgarno cleft in the 70S ribosome. This chain is Small ribosomal subunit protein uS11, found in Methylocella silvestris (strain DSM 15510 / CIP 108128 / LMG 27833 / NCIMB 13906 / BL2).